The sequence spans 37 residues: Large ribosomal subunit protein bL36 (37 aa).

It belongs to the bacterial ribosomal protein bL36 family.

The polypeptide is Large ribosomal subunit protein bL36 (Halorhodospira halophila (strain DSM 244 / SL1) (Ectothiorhodospira halophila (strain DSM 244 / SL1))).